A 517-amino-acid chain; its full sequence is Ribonuclease Y (517 aa).

A helical transmembrane segment spans residues 3 to 23 (AILYVIVAVIALILGGAAGVA). One can recognise a KH domain in the interval 207–292 (TVTVVSLPND…EMVEKAQKEV (86 aa)). In terms of domain architecture, HD spans 333 to 426 (VLKHSIEVAH…VAAADAISAA (94 aa)).

Belongs to the RNase Y family.

The protein resides in the cell membrane. Functionally, endoribonuclease that initiates mRNA decay. The protein is Ribonuclease Y of Symbiobacterium thermophilum (strain DSM 24528 / JCM 14929 / IAM 14863 / T).